Reading from the N-terminus, the 351-residue chain is C(7)-cyclitol 7-kinase (351 aa).

This sequence belongs to the ROK (NagC/XylR) family.

It catalyses the reaction valienone + ATP = valienone 7-phosphate + ADP + H(+). The catalysed reaction is validone + ATP = validone 7-phosphate + ADP + H(+). Involved in the biosynthesis of the antifungal agent validamycin A. Catalyzes the phosphorylation of valienone and validone to their 7-phosphate derivatives. In Streptomyces hygroscopicus subsp. limoneus, this protein is C(7)-cyclitol 7-kinase.